The sequence spans 564 residues: Nucleoprotein (564 aa).

The tract at residues 54–236 (LRKTKRGEED…VTKDESSINI (183 aa)) is binding site for the cap structure m7GTP. 2 residues coordinate Mn(2+): D380 and E382. The Zn(2+) site is built by E390, C497, H500, and C525. Residue D529 participates in Mn(2+) binding.

It belongs to the arenaviridae nucleocapsid protein family. Homomultimerizes to form the nucleocapsid. Binds to viral genomic RNA. Interacts with glycoprotein G2. Interacts with protein Z; this interaction probably directs the encapsidated genome to budding sites. Interacts with protein L; this interaction does not interfere with Z-L interaction. Interacts with host IKBKE (via Protein kinase domain); the interaction inhibits IKBKE kinase activity.

It localises to the virion. The protein localises to the host cytoplasm. Encapsidates the genome, protecting it from nucleases. The encapsidated genomic RNA is termed the nucleocapsid (NC). Serves as template for viral transcription and replication. The increased presence of protein N in host cell does not seem to trigger the switch from transcription to replication as observed in other negative strain RNA viruses. Through the interaction with host IKBKE, strongly inhibits the phosphorylation and nuclear translocation of host IRF3, a protein involved in interferon activation pathway, leading to the inhibition of interferon-beta and IRF3-dependent promoters activation. Also encodes a functional 3'-5' exoribonuclease that degrades preferentially dsRNA substrates and thereby participates in the suppression of interferon induction. The polypeptide is Nucleoprotein (Akodon azarae (Azara's grass mouse)).